The primary structure comprises 798 residues: Gelsolin (798 aa).

Positions Met-1–Ala-28 are cleaved as a signal peptide. Residues Arg-57–Phe-181 are actin-severing. The stretch at Glu-78–Gly-131 is one Gelsolin-like 1 repeat. Tyr-90 carries the post-translational modification Phosphotyrosine; by SRC. An actin-actin interfilament contact point region spans residues Asp-128–Gly-131. A 1,2-diacyl-sn-glycero-3-phospho-(1D-myo-inositol-4,5-bisphosphate) contacts are provided by residues Lys-167–Gln-174 and Arg-193–Arg-201. 4 Gelsolin-like repeats span residues Val-203–Leu-243, Leu-322–Thr-365, Ile-474–Lys-524, and Val-583–Gln-625. Residues Met-451 to Ile-792 are actin-binding, Ca-sensitive. Asp-599 is a Ca(2+) binding site. Position 612 is a phosphotyrosine; by SRC (Tyr-612). A Ca(2+)-binding site is contributed by Glu-623. Residue Tyr-662 is modified to Phosphotyrosine; by SRC. One copy of the Gelsolin-like 6 repeat lies at Leu-689 to Gly-730. The Ca(2+) site is built by Asp-705, Asp-706, and Glu-728.

Belongs to the villin/gelsolin family. In terms of assembly, binds to actin and to fibronectin. As to expression, isoform 1 and isoform 2 are ubiquitously expressed in early embryo. Isoform 1 is expressed in the fat body, and is abundant in hemolymph. Isoform 2 is expressed in parts of the gut.

It localises to the cytoplasm. Its subcellular location is the cytoskeleton. The protein localises to the secreted. In terms of biological role, calcium-regulated, actin-modulating protein that binds to the plus (or barbed) ends of actin monomers or filaments, preventing monomer exchange (end-blocking or capping). It can promote the assembly of monomers into filaments (nucleation) as well as sever filaments already formed. The protein is Gelsolin (Gel) of Drosophila melanogaster (Fruit fly).